A 398-amino-acid polypeptide reads, in one-letter code: tRNA-specific 2-thiouridylase MnmA (398 aa).

Residues 19–26 and leucine 45 contribute to the ATP site; that span reads AMSGGVDS. The Nucleophile role is filled by cysteine 113. A disulfide bridge links cysteine 113 with cysteine 210. An ATP-binding site is contributed by glycine 137. Residues 160–162 form an interaction with tRNA region; sequence RDQ. Catalysis depends on cysteine 210, which acts as the Cysteine persulfide intermediate.

Belongs to the MnmA/TRMU family.

It localises to the cytoplasm. The catalysed reaction is S-sulfanyl-L-cysteinyl-[protein] + uridine(34) in tRNA + AH2 + ATP = 2-thiouridine(34) in tRNA + L-cysteinyl-[protein] + A + AMP + diphosphate + H(+). Catalyzes the 2-thiolation of uridine at the wobble position (U34) of tRNA, leading to the formation of s(2)U34. The chain is tRNA-specific 2-thiouridylase MnmA from Rhodopseudomonas palustris (strain HaA2).